Reading from the N-terminus, the 506-residue chain is 2,3-bisphosphoglycerate-independent phosphoglycerate mutase (506 aa).

Positions 13 and 63 each coordinate Mn(2+). The active-site Phosphoserine intermediate is Ser-63. Residues His-124, 153–154 (RD), Arg-183, Arg-189, 254–257 (RADR), and Lys-330 contribute to the substrate site. Asp-396, His-400, Asp-437, His-438, and His-456 together coordinate Mn(2+).

The protein belongs to the BPG-independent phosphoglycerate mutase family. As to quaternary structure, monomer. Requires Mn(2+) as cofactor.

It catalyses the reaction (2R)-2-phosphoglycerate = (2R)-3-phosphoglycerate. Its pathway is carbohydrate degradation; glycolysis; pyruvate from D-glyceraldehyde 3-phosphate: step 3/5. In terms of biological role, catalyzes the interconversion of 2-phosphoglycerate and 3-phosphoglycerate. In Cereibacter sphaeroides (strain ATCC 17029 / ATH 2.4.9) (Rhodobacter sphaeroides), this protein is 2,3-bisphosphoglycerate-independent phosphoglycerate mutase.